Consider the following 339-residue polypeptide: Large ribosomal subunit protein uL11m (339 aa).

It belongs to the universal ribosomal protein uL11 family.

It localises to the mitochondrion. This Acanthamoeba castellanii (Amoeba) protein is Large ribosomal subunit protein uL11m (RPL11).